The sequence spans 1120 residues: Isoleucine--tRNA ligase (1120 aa).

The 'HIGH' region motif lies at 64-74 (PFANGLPHYGH). Residues 647 to 651 (KLSKR) carry the 'KMSKS' region motif. Residue K650 coordinates ATP.

The protein belongs to the class-I aminoacyl-tRNA synthetase family. IleS type 2 subfamily. In terms of assembly, monomer. Zn(2+) serves as cofactor.

The protein resides in the cytoplasm. The enzyme catalyses tRNA(Ile) + L-isoleucine + ATP = L-isoleucyl-tRNA(Ile) + AMP + diphosphate. Its function is as follows. Catalyzes the attachment of isoleucine to tRNA(Ile). As IleRS can inadvertently accommodate and process structurally similar amino acids such as valine, to avoid such errors it has two additional distinct tRNA(Ile)-dependent editing activities. One activity is designated as 'pretransfer' editing and involves the hydrolysis of activated Val-AMP. The other activity is designated 'posttransfer' editing and involves deacylation of mischarged Val-tRNA(Ile). The chain is Isoleucine--tRNA ligase from Ehrlichia canis (strain Jake).